A 112-amino-acid polypeptide reads, in one-letter code: MAM and fibronectin type III domain-containing protein 2 (112 aa).

Component of the acid-insoluble and acid-soluble organic matrix of the aragonitic skeleton (at protein level).

It is found in the secreted. The protein is MAM and fibronectin type III domain-containing protein 2 of Acropora millepora (Staghorn coral).